The sequence spans 132 residues: Large-conductance mechanosensitive channel (132 aa).

Helical transmembrane passes span 14 to 34 (VLDM…VDSL), 39 to 59 (INPI…AVTI), and 68 to 88 (IGNF…VFLI).

The protein belongs to the MscL family. Homopentamer.

It localises to the cell membrane. In terms of biological role, channel that opens in response to stretch forces in the membrane lipid bilayer. May participate in the regulation of osmotic pressure changes within the cell. In Latilactobacillus sakei subsp. sakei (strain 23K) (Lactobacillus sakei subsp. sakei), this protein is Large-conductance mechanosensitive channel.